The following is a 93-amino-acid chain: U12-lycotoxin-Ls1a (93 aa).

Positions 1–18 are cleaved as a signal peptide; it reads MKFAVILLFSLVVLAVAS. Positions 19 to 38 are excised as a propeptide; the sequence is ESVEEVRREIDIEDLPEQQR.

This sequence belongs to the neurotoxin 31 family. Contains 5 disulfide bonds. In terms of tissue distribution, expressed by the venom gland.

The protein resides in the secreted. This is U12-lycotoxin-Ls1a from Lycosa singoriensis (Wolf spider).